A 143-amino-acid chain; its full sequence is 3-dehydroquinate dehydratase (143 aa).

Residue Tyr22 is the Proton acceptor of the active site. Substrate is bound by residues Asn73, His79, and Asp86. His99 functions as the Proton donor in the catalytic mechanism. Substrate contacts are provided by residues 100 to 101 (IS) and Arg110.

This sequence belongs to the type-II 3-dehydroquinase family. Homododecamer.

The catalysed reaction is 3-dehydroquinate = 3-dehydroshikimate + H2O. It participates in metabolic intermediate biosynthesis; chorismate biosynthesis; chorismate from D-erythrose 4-phosphate and phosphoenolpyruvate: step 3/7. Its function is as follows. Catalyzes a trans-dehydration via an enolate intermediate. The chain is 3-dehydroquinate dehydratase from Salinispora arenicola (strain CNS-205).